A 134-amino-acid polypeptide reads, in one-letter code: Small ribosomal subunit protein uS12 (134 aa).

Residues 1–30 are disordered; that stretch reads MPTINQLVKHGREKVKEKSKSPALQGHPQK. Asp89 is modified (3-methylthioaspartic acid). Residues 106–134 are disordered; the sequence is GVENRRQSRSKYGAKRPKAGAAAGAKGKK. The segment covering 112–123 has biased composition (basic residues); the sequence is QSRSKYGAKRPK. Residues 124-134 are compositionally biased toward low complexity; sequence AGAAAGAKGKK.

This sequence belongs to the universal ribosomal protein uS12 family. Part of the 30S ribosomal subunit. Contacts proteins S8 and S17. May interact with IF1 in the 30S initiation complex.

In terms of biological role, with S4 and S5 plays an important role in translational accuracy. Functionally, interacts with and stabilizes bases of the 16S rRNA that are involved in tRNA selection in the A site and with the mRNA backbone. Located at the interface of the 30S and 50S subunits, it traverses the body of the 30S subunit contacting proteins on the other side and probably holding the rRNA structure together. The combined cluster of proteins S8, S12 and S17 appears to hold together the shoulder and platform of the 30S subunit. The polypeptide is Small ribosomal subunit protein uS12 (Fervidobacterium nodosum (strain ATCC 35602 / DSM 5306 / Rt17-B1)).